The primary structure comprises 28 residues: MPGIAFKGKDMVKAIQFLEIVVPCHCTT.

This is an uncharacterized protein from Saccharomyces cerevisiae (strain ATCC 204508 / S288c) (Baker's yeast).